A 69-amino-acid polypeptide reads, in one-letter code: DLITNSYTRGKPRHVTSWRNLKTRDVCDSLVEGRCIHNGCYCDRSAPHGNCCHTDGCTVAFWCPGTKWD.

Positions 1–23 (DLITNSYTRGKPRHVTSWRNLKT) are excised as a propeptide.

Post-translationally, contains 4 disulfide bonds. As to expression, expressed by the venom duct.

The protein resides in the secreted. The sequence is that of Conotoxin Cal12.1p5 from Californiconus californicus (California cone).